A 128-amino-acid polypeptide reads, in one-letter code: Glycine cleavage system H protein (128 aa).

The 83-residue stretch at 22-104 (AIVVGITDFA…YEEGWMITIE (83 aa)) folds into the Lipoyl-binding domain. Lysine 63 carries the post-translational modification N6-lipoyllysine.

The protein belongs to the GcvH family. The glycine cleavage system is composed of four proteins: P, T, L and H. (R)-lipoate is required as a cofactor.

Functionally, the glycine cleavage system catalyzes the degradation of glycine. The H protein shuttles the methylamine group of glycine from the P protein to the T protein. The polypeptide is Glycine cleavage system H protein (Anaeromyxobacter dehalogenans (strain 2CP-1 / ATCC BAA-258)).